Here is a 375-residue protein sequence, read N- to C-terminus: Protein RecA (375 aa).

The tract at residues 1 to 20 (MPAEMKSAASGSDPRSSGER) is disordered. 79–86 (GPESSGKT) provides a ligand contact to ATP.

Belongs to the RecA family.

Its subcellular location is the cytoplasm. In terms of biological role, can catalyze the hydrolysis of ATP in the presence of single-stranded DNA, the ATP-dependent uptake of single-stranded DNA by duplex DNA, and the ATP-dependent hybridization of homologous single-stranded DNAs. It interacts with LexA causing its activation and leading to its autocatalytic cleavage. This Parasynechococcus marenigrum (strain WH8102) protein is Protein RecA.